A 434-amino-acid chain; its full sequence is Methylenetetrahydrofolate--tRNA-(uracil-5-)-methyltransferase TrmFO (434 aa).

10-15 is an FAD binding site; the sequence is GAGLAG.

Belongs to the MnmG family. TrmFO subfamily. FAD serves as cofactor.

The protein resides in the cytoplasm. It carries out the reaction uridine(54) in tRNA + (6R)-5,10-methylene-5,6,7,8-tetrahydrofolate + NADH + H(+) = 5-methyluridine(54) in tRNA + (6S)-5,6,7,8-tetrahydrofolate + NAD(+). The enzyme catalyses uridine(54) in tRNA + (6R)-5,10-methylene-5,6,7,8-tetrahydrofolate + NADPH + H(+) = 5-methyluridine(54) in tRNA + (6S)-5,6,7,8-tetrahydrofolate + NADP(+). In terms of biological role, catalyzes the folate-dependent formation of 5-methyl-uridine at position 54 (M-5-U54) in all tRNAs. This Bacillus cereus (strain ATCC 14579 / DSM 31 / CCUG 7414 / JCM 2152 / NBRC 15305 / NCIMB 9373 / NCTC 2599 / NRRL B-3711) protein is Methylenetetrahydrofolate--tRNA-(uracil-5-)-methyltransferase TrmFO.